Here is a 440-residue protein sequence, read N- to C-terminus: MKAWIWFTFVACLFAASTEAASNLVCYYDSSSYTREGLGKLLNPDLEIALQFCSHLVYGYAGLRGENLQAYSMNENLDIYKHQFSEVTSLKRKYPHLKVLLSVGGDHDIDPDHPNKYIDLLEGEKVRQIGFIRSAYDLVKTYGFDGLDLAYQFPKNKPRKVHGDLGLAWKSIKKLFTGDFIVDPHAALHKEQFTALVRDVKDSLRADGFLLSLTVLPNVNSTWYFDIPALNGLVDFVNLATFDFLTPARNPEEADYSAPIYHPDGSKDRLAHLNADFQVEYWLSQGFPSNKINLGVATYGNAWKLTKDSGLEGVPVVPETSGPAPEGFQSQKPGLLSYAEICGKLSNPQNQFLKGNESPLRRVSDPTKRFGGIAYRPVDGQITEGIWVSYDDPDSASNKAAYARVKNLGGVALFDLSYDDFRGQCSGDKYPILRAIKYRL.

Positions methionine 1 to alanine 20 are cleaved as a signal peptide. One can recognise a GH18 domain in the interval serine 22–leucine 440. The cysteines at positions 26 and 53 are disulfide-linked. An N-linked (GlcNAc...) asparagine glycan is attached at asparagine 220. The cysteines at positions 342 and 425 are disulfide-linked.

The protein belongs to the glycosyl hydrolase 18 family. IDGF subfamily. Glycosylated. As to expression, primarily expressed in yolk cells and fat body. In larvae, it is expressed in the imaginal ring and weakly expressed in imaginal disks. More strongly expressed than Idgf1 and Idgf3.

The protein localises to the secreted. Its function is as follows. Cooperates with insulin-like peptides to stimulate the proliferation, polarization and motility of imaginal disk cells. May act by stabilizing the binding of insulin-like peptides to its receptor through a simultaneous interaction with both molecules to form a multiprotein signaling complex. This Drosophila melanogaster (Fruit fly) protein is Chitinase-like protein Idgf2 (Idgf2).